The following is a 186-amino-acid chain: MPFMNFRNFNFMPLLRPLNPVYKGAEHLCRKNIHNQVYNVETGKTIQILQDLVPLVLYRALPDAILDHHVELVIFPNSLNFPRIEGLTIYKFIFKTARLLLSSTYGSSAKRPIDIIHQLHSSMENKNVRYSMKCNWIASPNDEYTWVFHFDIDKKGIIYRHIIDNLERNRSRQCEKISALKPDPIE.

Its subcellular location is the mitochondrion. Has a role in meiosis. The sequence is that of Meiotically up-regulated gene 163 protein (mug163) from Schizosaccharomyces pombe (strain 972 / ATCC 24843) (Fission yeast).